The primary structure comprises 136 residues: Histone H3 (136 aa).

The disordered stretch occupies residues 1-43 (MARTKQTARKSTGGKAPRKQLATKAARKSAPASGGVKKPHRFR). N6-methylated lysine is present on lysine 5. Position 10 is an N6-acetyllysine; alternate (lysine 10). Residue lysine 10 is modified to N6-methylated lysine; alternate. Serine 11 is subject to Phosphoserine. Position 12 is a phosphothreonine (threonine 12). Residue lysine 15 is modified to N6-acetyllysine. Residues lysine 19 and lysine 24 each carry the N6-acetyllysine; alternate modification. 2 positions are modified to N6-methylated lysine; alternate: lysine 19 and lysine 24. N6-methylated lysine is present on lysine 28. Residue serine 29 is modified to Phosphoserine. At lysine 37 the chain carries N6-methylated lysine.

The protein belongs to the histone H3 family. As to quaternary structure, the nucleosome is a histone octamer containing two molecules each of H2A, H2B, H3 and H4 assembled in one H3-H4 heterotetramer and two H2A-H2B heterodimers. The octamer wraps approximately 147 bp of DNA. Acetylation is generally linked to gene activation. Can be acetylated to form H3K9ac, H3K14ac, H3K18ac and H3K23ac. H3K9ac could compete with H3K9me and prevent gene silencing. H3K9ac is restricted to euchromatin. Post-translationally, methylated to form mainly H3K4me, H3K9me, H3K18me, H3K23me, H3K27me and H3K36me. H3K4me1/2/3, H3K9me3, H3K27me3 and H3K36me1/2/3 are typical marks for euchromatin, whereas heterochromatic chromocenters are enriched in H3K9me1/2 and H3K27me1/2. H2BK143ub1 is probably prerequisite for H3K4me. In terms of processing, can be phosphorylated to form H3S10ph, H3T11ph and H3S28ph.

The protein localises to the nucleus. Its subcellular location is the chromosome. Its function is as follows. Core component of nucleosome. Nucleosomes wrap and compact DNA into chromatin, limiting DNA accessibility to the cellular machineries which require DNA as a template. Histones thereby play a central role in transcription regulation, DNA repair, DNA replication and chromosomal stability. DNA accessibility is regulated via a complex set of post-translational modifications of histones, also called histone code, and nucleosome remodeling. The polypeptide is Histone H3 (Griffithsia japonica (Red alga)).